We begin with the raw amino-acid sequence, 143 residues long: MRYLHKIELELNRLTSRYPFFKKIAFDAEIIKLVDDLNVDENVKCAIVAIDTSMRMQDFINEDNKDSFVLSTDVLSALFYKYLSQPFYQHDFLVLTDCVSRINELKSIRATITDEIALHNINKQIHYMFIQPYMNNEKVVSYE.

Dimer of heterodimer or heterotetramer composed of a small (Hexs-a) and large (Hexs-B) subunit.

The catalysed reaction is 3 isopentenyl diphosphate + (2E,6E)-farnesyl diphosphate = all-trans-hexaprenyl diphosphate + 3 diphosphate. In terms of biological role, catalyzes the condensation of three molecules of isopentenyl diphosphate with farnesyl diphosphate (FPP) to yield (all-E)-hexaprenyl diphosphate (HexPP; C30), the precursor of the prenyl side chain of menaquinone-6. Large subunit Hexs-B catalyzes the condensation reaction and the final product chain length is cooperatively regulated by both the Hexs-A and Hexs-B subunits using the whole size of the hydrophobic cleft as a ruler. The protein is Hexaprenyl-diphosphate synthase small subunit ((2E,6E)-farnesyl-diphosphate specific) (hexs-a) of Micrococcus luteus (Micrococcus lysodeikticus).